Reading from the N-terminus, the 288-residue chain is Prepilin leader peptidase/N-methyltransferase (288 aa).

Residues 14–34 (FITLATVLGLLVGSFLNVVVY) traverse the membrane as a helical segment. Residues Cys-71, Cys-74, Cys-96, and Cys-99 each contribute to the Zn(2+) site. Transmembrane regions (helical) follow at residues 103–123 (ISVR…VVAW), 127–147 (ASVE…LSLI), 158–178 (IVLP…WVPL), 182–202 (VCGA…FKLV), 227–247 (VLPL…VYLL), and 254–274 (MGTA…AVLW).

Belongs to the peptidase A24 family. Zn(2+) is required as a cofactor.

It is found in the cell inner membrane. It catalyses the reaction Typically cleaves a -Gly-|-Phe- bond to release an N-terminal, basic peptide of 5-8 residues from type IV prepilin, and then N-methylates the new N-terminal amino group, the methyl donor being S-adenosyl-L-methionine.. Functionally, plays an essential role in type IV pili and type II pseudopili formation by proteolytically removing the leader sequence from substrate proteins and subsequently monomethylating the alpha-amino group of the newly exposed N-terminal phenylalanine. This Pseudomonas putida (Arthrobacter siderocapsulatus) protein is Prepilin leader peptidase/N-methyltransferase (pilD).